A 231-amino-acid polypeptide reads, in one-letter code: eRF1 methyltransferase catalytic subunit mtq2 (231 aa).

S-adenosyl-L-methionine contacts are provided by residues Gly54 to Gly58, Asp80, and Asn130. Substrate is bound at residue Asn130–Tyr133.

The protein belongs to the eukaryotic/archaeal PrmC-related family. Heterodimer of mtq2-trm112. mtq2 is the catalytic subunit carrying the catalytic and the S-adenosyl L-methionine binding sites.

The protein localises to the cytoplasm. The protein resides in the nucleus. It carries out the reaction L-glutaminyl-[peptide chain release factor] + S-adenosyl-L-methionine = N(5)-methyl-L-glutaminyl-[peptide chain release factor] + S-adenosyl-L-homocysteine + H(+). Its function is as follows. Methylates eRF1 on 'Gln-182' using S-adenosyl L-methionine as methyl donor. eRF1 needs to be complexed to eRF3 in its GTP-bound form to be efficiently methylated. The protein is eRF1 methyltransferase catalytic subunit mtq2 (mtq2) of Schizosaccharomyces pombe (strain 972 / ATCC 24843) (Fission yeast).